Here is a 224-residue protein sequence, read N- to C-terminus: Ribonuclease HII (224 aa).

The RNase H type-2 domain maps to 1 to 210; the sequence is MKIGGIDEAG…VRKIEESIKA (210 aa). 3 residues coordinate a divalent metal cation: Asp7, Glu8, and Asp105.

It belongs to the RNase HII family. It depends on Mn(2+) as a cofactor. Requires Mg(2+) as cofactor.

It is found in the cytoplasm. The enzyme catalyses Endonucleolytic cleavage to 5'-phosphomonoester.. Functionally, endonuclease that specifically degrades the RNA of RNA-DNA hybrids. This is Ribonuclease HII from Pyrococcus furiosus (strain ATCC 43587 / DSM 3638 / JCM 8422 / Vc1).